We begin with the raw amino-acid sequence, 352 residues long: 4-hydroxy-2-oxovalerate aldolase (352 aa).

Residues Val13–Ala265 enclose the Pyruvate carboxyltransferase domain. Arg21–Asp22 is a substrate binding site. Asp22 is a Mn(2+) binding site. His25 serves as the catalytic Proton acceptor. Residues Ser175 and His204 each coordinate substrate. Mn(2+) contacts are provided by His204 and His206. Tyr295 is a substrate binding site.

Belongs to the 4-hydroxy-2-oxovalerate aldolase family.

It carries out the reaction (S)-4-hydroxy-2-oxopentanoate = acetaldehyde + pyruvate. This is 4-hydroxy-2-oxovalerate aldolase from Mycobacterium avium (strain 104).